The chain runs to 134 residues: Small ribosomal subunit protein uS8c (134 aa).

It belongs to the universal ribosomal protein uS8 family. In terms of assembly, part of the 30S ribosomal subunit.

The protein resides in the plastid. In terms of biological role, one of the primary rRNA binding proteins, it binds directly to 16S rRNA central domain where it helps coordinate assembly of the platform of the 30S subunit. In Cuscuta reflexa (Southern Asian dodder), this protein is Small ribosomal subunit protein uS8c (rps8).